The chain runs to 336 residues: Cytochrome P450 monooxygenase lcsN (336 aa).

Position 271 (C271) interacts with heme.

This sequence belongs to the cytochrome P450 family. It depends on heme as a cofactor.

It participates in secondary metabolite biosynthesis. In terms of biological role, cytochrome P450 monooxygenase; part of the gene cluster that mediates the biosynthesis of the lipopeptide antibiotics leucinostatins that show extensive biological activities, including antimalarial, antiviral, antibacterial, antifungal, and antitumor activities, as well as phytotoxic. Leucinostatin A contains nine amino acid residues, including the unusual amino acid 4-methyl-L-proline (MePro), 2-amino-6-hydroxy-4-methyl-8-oxodecanoic acid (AHyMeOA), 3-hydroxyleucine (HyLeu), alpha-aminoisobutyric acid (AIB), beta-Ala, a 4-methylhex-2-enoic acid at the N-terminus as well as a N1,N1-dimethylpropane-1,2-diamine (DPD) at the C-terminus. The biosynthesis of leucinostatins is probably initiated with the assembly of 4-methylhex-2-enoic acid by a reducing PKS. Two reducing polyketide synthases, lcsB and lcsC, have been identified in the cluster and it is not clear which is the one that assembles 4-methylhex-2-enoic acid since both contain KS, AT, DH, cMT, ER, KR and ACP domains. The polyketide residue might be transferred to the NRPS lcsA, mediated by two additional enzymes, the acyl-CoA ligase lcsD and the thioesterase lcsE. The linear polyketide carboxylic acid, which is released from PKS, is converted to a CoA thioester by lcsD, and then lcsE hydrolyzes the thiol bond and shuttles the polyketide intermediate to lcsA. The C domain of the first module catalyzed the condensation of 4-methylhex-2-enoic acid and MePro carried by domain A1, followed by successive condensations of nine amino acids to trigger the elongation of the linear peptide. A5 and A6 domains of lcsA are proposed to incorporate leucine, A2 AHyMeOA, and A3 incorporates HyLeu. A4, A7 and A8 incorporate AIB. The AHyMeOA in leucinostatin A activated by the A2 might be produced by the second PKS (lcsB or lcsC) present within the cluster. The MePro is probably produced via leucine cyclization and may originate from a separate pathway, independent of the cluster. Another nonproteinogenic amino acid, beta-Ala, could be produced by an aspartic acid decarboxylase also localized outside of the cluster. Two candidates are VFPBJ_01400 and VFPBJ_10476. The final peptide scaffold may be released by the NAD(P)H-dependent thioester reductase (TE) at the C-terminal region of lcsA. Transamination of the lcsA product by the transaminase lcsP may produce DPD at the C-terminus. Further hydroxylation steps performed alternatively by the cytochrome P450 monooxygenases lcsI, lcsK and lcsN then yield the non-methylated leucinostatins precursor. It is also possible that leucines can be hydroxylated prior to their incorporation into the peptide. Varying extents of methylation then lead to the formation of leucinostatins A and B. This chain is Cytochrome P450 monooxygenase lcsN, found in Purpureocillium lilacinum (Paecilomyces lilacinus).